A 1343-amino-acid polypeptide reads, in one-letter code: uncharacterized protein (1343 aa).

The chain crosses the membrane as a helical span at residues 432–449; the sequence is LYVYFVTTKTGVVAFSLL.

The protein belongs to the IIV-6 295L family.

It localises to the membrane. This is an uncharacterized protein from Acheta domesticus (House cricket).